The primary structure comprises 510 residues: Histidine ammonia-lyase (510 aa).

Residues 143-145 (ASG) constitute a cross-link (5-imidazolinone (Ala-Gly)). Serine 144 carries the 2,3-didehydroalanine (Ser) modification.

This sequence belongs to the PAL/histidase family. Contains an active site 4-methylidene-imidazol-5-one (MIO), which is formed autocatalytically by cyclization and dehydration of residues Ala-Ser-Gly.

The protein localises to the cytoplasm. The enzyme catalyses L-histidine = trans-urocanate + NH4(+). It functions in the pathway amino-acid degradation; L-histidine degradation into L-glutamate; N-formimidoyl-L-glutamate from L-histidine: step 1/3. The protein is Histidine ammonia-lyase of Photobacterium profundum (strain SS9).